A 2731-amino-acid chain; its full sequence is Teneurin-m (2731 aa).

2 disordered regions span residues 1–60 and 103–136; these read MNPY…QNQQ and LLEGVTPTAPPDVPPRNPTMSRMQNGRLTVNNPN. The Cytoplasmic segment spans residues 1 to 229; sequence MNPYEYESTL…RKDLVARCSS (229 aa). The span at 110-119 shows a compositional bias: pro residues; that stretch reads TAPPDVPPRN. Over residues 120 to 136 the composition is skewed to polar residues; the sequence is PTMSRMQNGRLTVNNPN. Residues 230 to 250 traverse the membrane as a helical segment; it reads PWFGIGSISVLFAFVVMLILL. The Extracellular segment spans residues 251 to 2731; the sequence is TTTGVIKWNQ…RQLKFGELSA (2481 aa). The disordered stretch occupies residues 321–387; the sequence is SSAATVTTAT…RTFPARSFPP (67 aa). Positions 322–370 are enriched in low complexity; it reads SAATVTTATSNSGTAQGLQSTSASAEATSSAATSSSQSSLTPSLSSSLA. 4 EGF-like domains span residues 536-572, 574-606, 643-676, and 738-774; these read GGDDCSESVCPVLCSQHGEYTNGECICNPGWKGKECS, RHDECEVADCSGHGHCVSGKCQCMRGYKGKFCE, DALQCLPDCSGHGTFDLDTQTCTCEAKWSGDDCS, and TIEGCPNSCAGHGQCRVSGEGQWECRCYEGWDGPDCG. 11 cysteine pairs are disulfide-bonded: Cys-540–Cys-549, Cys-545–Cys-560, Cys-562–Cys-571, Cys-578–Cys-589, Cys-583–Cys-594, Cys-596–Cys-605, Cys-651–Cys-664, Cys-666–Cys-675, Cys-742–Cys-752, Cys-746–Cys-762, and Cys-764–Cys-773. A glycan (N-linked (GlcNAc...) asparagine) is linked at Asn-857. 4 NHL repeats span residues 1160 to 1201, 1202 to 1246, 1391 to 1434, and 1459 to 1502; these read ECPD…IMTD, GSIR…VRDT, STAY…VRVI, and CFEA…VMSS. One copy of the YD repeat lies at 1618–1652; the sequence is TGLLRTKLDSTGRSYVYNYDEFGRLTSAVTPTGRV. The segment at 2691-2731 is disordered; the sequence is LADDPGNVAFQRDAKRKRRKTGSSHRSASNRRQLKFGELSA. Basic residues predominate over residues 2704 to 2724; that stretch reads AKRKRRKTGSSHRSASNRRQL.

The protein belongs to the tenascin family. Teneurin subfamily. Homodimer. Heterodimer with Ten-a. Interacts with Ten-a; the interaction occurs at the neuromuscular junction. Interacts with alpha-Spec and cher. Post-translationally, phosphorylated. Phosphorylation occurs at tyrosine residues. In terms of processing, proteolytically cleaved. In terms of tissue distribution, expressed in muscles and motor neurons (at protein level).

Its subcellular location is the cytoplasm. The protein resides in the postsynaptic cell membrane. It localises to the synapse. It is found in the synaptosome. The protein localises to the membrane. Its function is as follows. Involved in neural development, regulating the establishment of proper connectivity within the nervous system. Acts as a homophilic and heterophilic synaptic cell adhesion molecule that drives synapse assembly. Promotes bi-directional trans-synaptic signaling with Ten-a to organize neuromuscular synapses. Functions in olfactory synaptic partner matching by promoting homophilic cell adhesion between pre-synaptic olfactory receptor neurons (ORN) axons and post-synaptic projection neurons (PN) dendrites partner in the developing antennal lobe to form stable connections. Also required for peripheral axon growth cone guidance and target recognition of motor neurons. The chain is Teneurin-m (Ten-m) from Drosophila melanogaster (Fruit fly).